The primary structure comprises 1646 residues: Monensin-resistant homolog 2 (1646 aa).

It belongs to the MON2 family.

It localises to the golgi apparatus. May be required for traffic between late Golgi and early endosomes. In Caenorhabditis elegans, this protein is Monensin-resistant homolog 2 (mon-2).